We begin with the raw amino-acid sequence, 375 residues long: Tyrosine--tRNA ligase (375 aa).

The L-tyrosine site is built by Tyr37, Tyr168, Gln172, Asp175, and Gln190. The short motif at 251-255 (KMSKS) is the 'KMSKS' region element. Lys254 serves as a coordination point for ATP.

This sequence belongs to the class-I aminoacyl-tRNA synthetase family. TyrS type 4 subfamily. As to quaternary structure, homodimer.

The protein resides in the cytoplasm. The enzyme catalyses tRNA(Tyr) + L-tyrosine + ATP = L-tyrosyl-tRNA(Tyr) + AMP + diphosphate + H(+). Its function is as follows. Catalyzes the attachment of tyrosine to tRNA(Tyr) in a two-step reaction: tyrosine is first activated by ATP to form Tyr-AMP and then transferred to the acceptor end of tRNA(Tyr). The polypeptide is Tyrosine--tRNA ligase (Pyrococcus horikoshii (strain ATCC 700860 / DSM 12428 / JCM 9974 / NBRC 100139 / OT-3)).